Here is an 821-residue protein sequence, read N- to C-terminus: Centrosomal protein of 95 kDa (821 aa).

Disordered stretches follow at residues 310–354 (TLCK…FPQK), 390–474 (ATGE…DTHH), and 514–550 (KEAF…SSKA). Composition is skewed to basic and acidic residues over residues 325 to 340 (ESSK…RSEN) and 390 to 410 (ATGE…HSAN). Over residues 427–441 (RKPRPGFSMHRKAPY) the composition is skewed to basic residues. Residues Ser445, Ser447, and Ser449 each carry the phosphoserine modification. 2 coiled-coil regions span residues 578 to 627 (LTKM…VKKE) and 695 to 789 (LQIQ…DDDA).

Its subcellular location is the cytoplasm. It is found in the cytoskeleton. It localises to the microtubule organizing center. The protein resides in the centrosome. The protein localises to the spindle pole. The polypeptide is Centrosomal protein of 95 kDa (Cep95) (Rattus norvegicus (Rat)).